Reading from the N-terminus, the 308-residue chain is Elongation factor Ts (308 aa).

Residues Thr-80–Val-83 form an involved in Mg(2+) ion dislocation from EF-Tu region.

The protein belongs to the EF-Ts family.

The protein resides in the cytoplasm. In terms of biological role, associates with the EF-Tu.GDP complex and induces the exchange of GDP to GTP. It remains bound to the aminoacyl-tRNA.EF-Tu.GTP complex up to the GTP hydrolysis stage on the ribosome. The chain is Elongation factor Ts from Sphingopyxis alaskensis (strain DSM 13593 / LMG 18877 / RB2256) (Sphingomonas alaskensis).